The primary structure comprises 188 residues: Ribosome-recycling factor (188 aa).

This sequence belongs to the RRF family.

Its subcellular location is the cytoplasm. Responsible for the release of ribosomes from messenger RNA at the termination of protein biosynthesis. May increase the efficiency of translation by recycling ribosomes from one round of translation to another. The protein is Ribosome-recycling factor of Dinoroseobacter shibae (strain DSM 16493 / NCIMB 14021 / DFL 12).